Reading from the N-terminus, the 218-residue chain is Elongation factor Ts (218 aa).

Positions Thr82–Val85 are involved in Mg(2+) ion dislocation from EF-Tu.

The protein belongs to the EF-Ts family.

Its subcellular location is the cytoplasm. In terms of biological role, associates with the EF-Tu.GDP complex and induces the exchange of GDP to GTP. It remains bound to the aminoacyl-tRNA.EF-Tu.GTP complex up to the GTP hydrolysis stage on the ribosome. In Prochlorococcus marinus (strain MIT 9312), this protein is Elongation factor Ts.